The chain runs to 110 residues: Large ribosomal subunit protein uL22 (110 aa).

It belongs to the universal ribosomal protein uL22 family. As to quaternary structure, part of the 50S ribosomal subunit.

Functionally, this protein binds specifically to 23S rRNA; its binding is stimulated by other ribosomal proteins, e.g. L4, L17, and L20. It is important during the early stages of 50S assembly. It makes multiple contacts with different domains of the 23S rRNA in the assembled 50S subunit and ribosome. In terms of biological role, the globular domain of the protein is located near the polypeptide exit tunnel on the outside of the subunit, while an extended beta-hairpin is found that lines the wall of the exit tunnel in the center of the 70S ribosome. The polypeptide is Large ribosomal subunit protein uL22 (Shigella flexneri serotype 5b (strain 8401)).